The chain runs to 246 residues: MDWQKITEKMCDFIQEKVKNSQSQGVVLGLSGGIDSALVATLCKRALKENVFALLMPTQISNKANLEDALRLCADLNLEYKIIEIQSILDAFIKQSENTTLVSLGNFAARIRMSLLYDYSALKNSLVIGTSNKSELLLGYGTIYGDLACAFNPIGSLYKSEIYALAKYLNLHENFIKKAPSADLWENQSDEADLGFSYAKIDEGLKALETNDEKLLRTLDPSLIAMLKNRMQKNAFKGKMPEILEI.

G29–S36 contacts ATP. Residue D35 coordinates Mg(2+). Residue R110 participates in deamido-NAD(+) binding. Residue T130 participates in ATP binding. E135 is a Mg(2+) binding site. Positions 159 and 181 each coordinate ATP.

The protein belongs to the NAD synthetase family. Homodimer.

It carries out the reaction deamido-NAD(+) + NH4(+) + ATP = AMP + diphosphate + NAD(+) + H(+). The protein operates within cofactor biosynthesis; NAD(+) biosynthesis; NAD(+) from deamido-NAD(+) (ammonia route): step 1/1. Its function is as follows. Catalyzes the ATP-dependent amidation of deamido-NAD to form NAD. Uses ammonia as a nitrogen source. This chain is NH(3)-dependent NAD(+) synthetase, found in Campylobacter jejuni subsp. jejuni serotype O:23/36 (strain 81-176).